Here is a 246-residue protein sequence, read N- to C-terminus: MyoD family inhibitor (246 aa).

Disordered stretches follow at residues 1 to 76 and 91 to 151; these read MYQV…LDST and GNPL…SKST. Low complexity predominate over residues 14-26; the sequence is APYGAPSAAPGPA. An MDFI domain is found at 99-246; it reads LLPNDSGHPS…MECCGLCFSS (148 aa).

The protein belongs to the MDFI family. Interacts (via C-terminus) with AXIN1 and LEF1. Interacts with CCNT2. Interacts (via C-terminus) with Piezo channel composed of PIEZO1 or PIEZO2; the interaction prolongs Piezo channel inactivation.

It is found in the nucleus. It localises to the cytoplasm. Functionally, inhibits the transactivation activity of the Myod family of myogenic factors and represses myogenesis. Acts by associating with Myod family members and retaining them in the cytoplasm by masking their nuclear localization signals. Can also interfere with the DNA-binding activity of Myod family members. Plays an important role in trophoblast and chondrogenic differentiation. Regulates the transcriptional activity of TCF7L1/TCF3 by interacting directly with TCF7L1/TCF3 and preventing it from binding DNA. Binds to the axin complex, resulting in an increase in the level of free beta-catenin. Affects axin regulation of the WNT and JNK signaling pathways. Regulates the activity of mechanosensitive Piezo channel. The protein is MyoD family inhibitor (MDFI) of Homo sapiens (Human).